The sequence spans 414 residues: UDP-N-acetylglucosamine 1-carboxyvinyltransferase (414 aa).

19–20 (KN) serves as a coordination point for phosphoenolpyruvate. R89 serves as a coordination point for UDP-N-acetyl-alpha-D-glucosamine. C113 functions as the Proton donor in the catalytic mechanism. C113 is subject to 2-(S-cysteinyl)pyruvic acid O-phosphothioketal. Residues 118-122 (RPIDL), D301, and V323 each bind UDP-N-acetyl-alpha-D-glucosamine.

The protein belongs to the EPSP synthase family. MurA subfamily.

The protein localises to the cytoplasm. It carries out the reaction phosphoenolpyruvate + UDP-N-acetyl-alpha-D-glucosamine = UDP-N-acetyl-3-O-(1-carboxyvinyl)-alpha-D-glucosamine + phosphate. Its pathway is cell wall biogenesis; peptidoglycan biosynthesis. In terms of biological role, cell wall formation. Adds enolpyruvyl to UDP-N-acetylglucosamine. This is UDP-N-acetylglucosamine 1-carboxyvinyltransferase from Bdellovibrio bacteriovorus (strain ATCC 15356 / DSM 50701 / NCIMB 9529 / HD100).